A 620-amino-acid chain; its full sequence is MAAATADPGAGNPQPGDSSGGGAGGGLPSPGEQELSRRLQRLYPAVNQQETPLPRSWSPKDKYNYIGLSQGNLRVHYKGHGKNHKDAASVRATHPIPAACGIYYFEVKIVSKGRDGYMGIGLSAQGVNMNRLPGWDKHSYGYHGDDGHSFCSSGTGQPYGPTFTTGDVIGCCVNLINGTCFYTKNGHSLGIAFTDLPANLYPTVGLQTPGEIVDANFGQQPFLFDIEDYMREWRAKVQGTVHCFPISARLGEWQAVLQNMVSSYLVHHGYCATATAFARMTETPIQEEQASIKNRQKIQKLVLEGRVGEAIETTQRFYPGLLEHNPNLLFMLKCRQFVEMVNGTDSEVRSLSSRSPKSQDSYPGSPSLSPRHGPSSSHMHNTGADSPSCSNGVASTKSKQNHSKYPAPSSSSSSSSSSSSSSPSSVNYSESNSTDSTKSQHHSSTSNQETSDSEMEMEAEHYPNGVLGSMSTRIVNGAYKHEDLQTDESSMDDRHPRRQLCGGNQAATERIILFGRELQALSEQLGREYGKNLAHTEMLQDAFSLLAYSDPWSCPVGQQLDPIQREPVCAALNSAILESQNLPKQPPLMLALGQASECLRLMARAGLGSCSFARVDDYLH.

The segment at 1 to 41 (MAAATADPGAGNPQPGDSSGGGAGGGLPSPGEQELSRRLQR) is disordered. Ala2 carries the N-acetylalanine modification. Residues 18 to 28 (SSGGGAGGGLP) show a composition bias toward gly residues. The B30.2/SPRY domain occupies 35 to 222 (LSRRLQRLYP…VDANFGQQPF (188 aa)). The region spanning 253 to 285 (WQAVLQNMVSSYLVHHGYCATATAFARMTETPI) is the LisH domain. The region spanning 291–348 (SIKNRQKIQKLVLEGRVGEAIETTQRFYPGLLEHNPNLLFMLKCRQFVEMVNGTDSEV) is the CTLH domain. The segment covering 347 to 398 (EVRSLSSRSPKSQDSYPGSPSLSPRHGPSSSHMHNTGADSPSCSNGVASTKS) has biased composition (polar residues). Positions 347–458 (EVRSLSSRSP…ETSDSEMEME (112 aa)) are disordered. Phosphoserine is present on Ser361. At Tyr362 the chain carries Phosphotyrosine. Ser365, Ser367, Ser369, Ser422, Ser451, and Ser453 each carry phosphoserine. A compositionally biased stretch (low complexity) spans 409-436 (SSSSSSSSSSSSSSPSSVNYSESNSTDS).

The protein belongs to the RANBP9/10 family. May form homodimers. Identified in the CTLH complex that contains GID4, RANBP9 and/or RANBP10, MKLN1, MAEA, RMND5A (or alternatively its paralog RMND5B), GID8, ARMC8, WDR26 and YPEL5. Within this complex, MAEA, RMND5A (or alternatively its paralog RMND5B), GID8, WDR26, and RANBP9 and/or RANBP10 form the catalytic core, while GID4, MKLN1, ARMC8 and YPEL5 have ancillary roles. Interacts with RAN and RANBP9. Interacts with the HGF receptor MET. Interacts with AR. Interacts with TUBB1. Interacts with YPEL5. May interact with TUBB5. Interacts with DDX4. In terms of tissue distribution, broadly expressed, with highest levels in skeletal muscle.

Its subcellular location is the cytoplasm. It localises to the cytosol. The protein resides in the nucleus. May act as an adapter protein to couple membrane receptors to intracellular signaling pathways. Core component of the CTLH E3 ubiquitin-protein ligase complex that selectively accepts ubiquitin from UBE2H and mediates ubiquitination and subsequent proteasomal degradation of the transcription factor HBP1. Enhances dihydrotestosterone-induced transactivation activity of AR, as well as dexamethasone-induced transactivation activity of NR3C1, but does not affect estrogen-induced transactivation. Acts as a guanine nucleotide exchange factor (GEF) for RAN GTPase. May play an essential role in hemostasis and in maintaining microtubule dynamics with respect to both platelet shape and function. The sequence is that of Ran-binding protein 10 (RANBP10) from Homo sapiens (Human).